The primary structure comprises 322 residues: uncharacterized protein (322 aa).

This is an uncharacterized protein from Aquifex aeolicus (strain VF5).